The following is a 377-amino-acid chain: Succinyl-diaminopimelate desuccinylase (377 aa).

H68 provides a ligand contact to Zn(2+). D70 is a catalytic residue. Zn(2+) is bound at residue D101. Residue E135 is the Proton acceptor of the active site. Positions 136, 164, and 350 each coordinate Zn(2+).

This sequence belongs to the peptidase M20A family. DapE subfamily. As to quaternary structure, homodimer. Requires Zn(2+) as cofactor. Co(2+) is required as a cofactor.

It catalyses the reaction N-succinyl-(2S,6S)-2,6-diaminopimelate + H2O = (2S,6S)-2,6-diaminopimelate + succinate. It functions in the pathway amino-acid biosynthesis; L-lysine biosynthesis via DAP pathway; LL-2,6-diaminopimelate from (S)-tetrahydrodipicolinate (succinylase route): step 3/3. Its function is as follows. Catalyzes the hydrolysis of N-succinyl-L,L-diaminopimelic acid (SDAP), forming succinate and LL-2,6-diaminopimelate (DAP), an intermediate involved in the bacterial biosynthesis of lysine and meso-diaminopimelic acid, an essential component of bacterial cell walls. This Acinetobacter baumannii (strain AB307-0294) protein is Succinyl-diaminopimelate desuccinylase.